The primary structure comprises 734 residues: Photosystem I P700 chlorophyll a apoprotein A2 (734 aa).

The next 8 helical transmembrane spans lie at 46–69, 135–158, 175–199, 273–291, 330–353, 369–395, 417–439, and 517–535; these read IFAS…FHVA, LYTG…LHLQ, LNHH…HVAI, MAHH…GHMY, IHFQ…QHMY, AALY…IFFI, AIIS…LYVH, and FLVH…LILV. Positions 559 and 568 each coordinate [4Fe-4S] cluster. 2 helical membrane passes run 575–596 and 643–665; these read AFYL…YWHW and LSVW…MFLI. Chlorophyll a contacts are provided by histidine 654, methionine 662, and tyrosine 670. Tryptophan 671 is a phylloquinone binding site. The chain crosses the membrane as a helical span at residues 707–727; the sequence is LVGLAHFSVGYIFTYAAFLIA.

The protein belongs to the PsaA/PsaB family. The PsaA/B heterodimer binds the P700 chlorophyll special pair and subsequent electron acceptors. PSI consists of a core antenna complex that captures photons, and an electron transfer chain that converts photonic excitation into a charge separation. The eukaryotic PSI reaction center is composed of at least 11 subunits. Requires P700 is a chlorophyll a/chlorophyll a' dimer, A0 is one or more chlorophyll a, A1 is one or both phylloquinones and FX is a shared 4Fe-4S iron-sulfur center. as cofactor.

It is found in the plastid. The protein resides in the chloroplast thylakoid membrane. The catalysed reaction is reduced [plastocyanin] + hnu + oxidized [2Fe-2S]-[ferredoxin] = oxidized [plastocyanin] + reduced [2Fe-2S]-[ferredoxin]. In terms of biological role, psaA and PsaB bind P700, the primary electron donor of photosystem I (PSI), as well as the electron acceptors A0, A1 and FX. PSI is a plastocyanin-ferredoxin oxidoreductase, converting photonic excitation into a charge separation, which transfers an electron from the donor P700 chlorophyll pair to the spectroscopically characterized acceptors A0, A1, FX, FA and FB in turn. Oxidized P700 is reduced on the lumenal side of the thylakoid membrane by plastocyanin. The polypeptide is Photosystem I P700 chlorophyll a apoprotein A2 (Arabidopsis thaliana (Mouse-ear cress)).